A 901-amino-acid chain; its full sequence is MASNIKEQAKKQFELNGQSYTYYDLQTLEEKGLAKISKLPYSIRVLLESVLRQEDDFVITDDHIKALSKFGNAGNEGEVPFKPSRVILQDFTGVPAVVDLASLRKAMNDVGGDINKINPEVPVDLVIDHSVQVDSYANPEALERNMKLEFERNYERYQFLNWATKAFDNYNAVPPATGIVHQVNLEYLANVVHVRDVDGEKTAFPDTLVGTDSHTTMINGIGVLGWGVGGIEAEAGMLGQPSYFPIPEVIGVRLTHSLPQGSTATDLALRVTEELRKKGVVGKFVEFFGPGVQHLPLADRATIANMAPEYGATCGFFPVDEESLKYMKLTGRDEEHIELVKEYLQQNHMFFDVEKEDPEYTDVIDLDLSTVEASLSGPKRPQDLIFLSDMKKEFEKSVTAPAGNQGHGLDQSEFDKKAEINFNDGSKATMKTGDIAIAAITSCTNTSNPYVMLGAGLVAKKAVEKGLKVPEFVKTSLAPGSKVVTGYLRDSGLQQYLDDLGFNLVGYGCTTCIGNSGPLLPEIEKAVADEDLLVTSVLSGNRNFEGRIHPLVKANYLASPQLVVAYALAGTVDIDLQNEPIGKGKDGKDVYLQDIWPSIQEVSDTVDKVVTPELFLEEYKNVYHNNEMWNEIDVTDEPLYDFDPNSTYIQNPTFFQGLSKEPGKIEPLKSLRVMGKFGDSVTTDHISPAGAIGKDTPAGKYLLDHDVAIRNFNSYGSRRGNHEVMVRGTFANIRIKNQLAPGTEGGFTTYWPTGEIMPIYDAAMKYKEDGTGLVVLAGNDYGMGSSRDWAAKGTNLLGVKTVIAQSYERIHRSNLVMMGVLPLQFQQGESAEALGLDGKEEISVDINEDVQPHDFVNVTAKKENGEIINFKAIVRFDSLVELDYYRHGGILQMVLRNKLAQ.

Residues Cys443, Cys509, and Cys512 each contribute to the [4Fe-4S] cluster site.

Belongs to the aconitase/IPM isomerase family. Monomer. [4Fe-4S] cluster is required as a cofactor.

The enzyme catalyses citrate = D-threo-isocitrate. It carries out the reaction (2S,3R)-3-hydroxybutane-1,2,3-tricarboxylate = 2-methyl-cis-aconitate + H2O. It functions in the pathway carbohydrate metabolism; tricarboxylic acid cycle; isocitrate from oxaloacetate: step 2/2. It participates in organic acid metabolism; propanoate degradation. Its function is as follows. Involved in the catabolism of short chain fatty acids (SCFA) via the tricarboxylic acid (TCA)(acetyl degradation route) and probably the 2-methylcitrate cycle I (propionate degradation route). Catalyzes the reversible isomerization of citrate to isocitrate via cis-aconitate. Could catalyze the hydration of 2-methyl-cis-aconitate to yield (2R,3S)-2-methylisocitrate. The apo form of AcnA functions as a RNA-binding regulatory protein. The protein is Aconitate hydratase A (acnA) of Staphylococcus epidermidis (strain ATCC 35984 / DSM 28319 / BCRC 17069 / CCUG 31568 / BM 3577 / RP62A).